The chain runs to 96 residues: Co-chaperonin GroES (96 aa).

The protein belongs to the GroES chaperonin family. As to quaternary structure, heptamer of 7 subunits arranged in a ring. Interacts with the chaperonin GroEL.

It localises to the cytoplasm. In terms of biological role, together with the chaperonin GroEL, plays an essential role in assisting protein folding. The GroEL-GroES system forms a nano-cage that allows encapsulation of the non-native substrate proteins and provides a physical environment optimized to promote and accelerate protein folding. GroES binds to the apical surface of the GroEL ring, thereby capping the opening of the GroEL channel. This is Co-chaperonin GroES from Polynucleobacter necessarius subsp. necessarius (strain STIR1).